Here is a 424-residue protein sequence, read N- to C-terminus: Endochitinase 1 (424 aa).

An N-terminal signal peptide occupies residues 1-22 (MPSLFAQSLAIIATLQATLGLA). The 364-residue stretch at 39-402 (YVNAVYFTNW…GTSSNKLGGP (364 aa)) folds into the GH18 domain. 3 N-linked (GlcNAc...) asparagine glycosylation sites follow: Asn-74, Asn-78, and Asn-96. Residues 103 to 104 (GN) and 130 to 133 (GGWT) each bind chitin. Glu-172 functions as the Proton donor in the catalytic mechanism. Residues Tyr-173 and 238–241 (MAYD) each bind chitin. Residues Asn-248 and Asn-347 are each glycosylated (N-linked (GlcNAc...) asparagine). Trp-379 lines the chitin pocket. The interval 385–412 (RQGPDSLIGTSSNKLGGPDTTENLLNYP) is disordered. Over residues 392-408 (IGTSSNKLGGPDTTENL) the composition is skewed to polar residues.

This sequence belongs to the glycosyl hydrolase 18 family. Chitinase class V subfamily.

It is found in the secreted. It catalyses the reaction Random endo-hydrolysis of N-acetyl-beta-D-glucosaminide (1-&gt;4)-beta-linkages in chitin and chitodextrins.. In terms of biological role, secreted chitinase involved in the degradation of chitin, a component of the cell walls of fungi and exoskeletal elements of some animals (including worms and arthropods). Participates in the infection process and directly acts in the penetration process of the host cuticle. This is Endochitinase 1 (chit1) from Metarhizium robertsii (strain ARSEF 23 / ATCC MYA-3075) (Metarhizium anisopliae (strain ARSEF 23)).